A 239-amino-acid polypeptide reads, in one-letter code: Ribosomal RNA large subunit methyltransferase E (239 aa).

S-adenosyl-L-methionine contacts are provided by Gly81, Trp83, Asp104, Asp120, and Asp144. Lys184 functions as the Proton acceptor in the catalytic mechanism.

This sequence belongs to the class I-like SAM-binding methyltransferase superfamily. RNA methyltransferase RlmE family.

It localises to the cytoplasm. It carries out the reaction uridine(2552) in 23S rRNA + S-adenosyl-L-methionine = 2'-O-methyluridine(2552) in 23S rRNA + S-adenosyl-L-homocysteine + H(+). Specifically methylates the uridine in position 2552 of 23S rRNA at the 2'-O position of the ribose in the fully assembled 50S ribosomal subunit. The protein is Ribosomal RNA large subunit methyltransferase E of Rhizobium rhizogenes (strain K84 / ATCC BAA-868) (Agrobacterium radiobacter).